The chain runs to 390 residues: Ribosomal RNA small subunit methyltransferase H (390 aa).

S-adenosyl-L-methionine is bound by residues 47–49, D66, F93, D122, and Q129; that span reads GGH. A disordered region spans residues 282–390; that stretch reads SKTPPGLPID…SHREDVEGEQ (109 aa). Residues 305-316 show a composition bias toward basic and acidic residues; that stretch reads GSEKADEQENNK. Polar residues predominate over residues 348–358; the sequence is SGSSTTYSARS. 2 stretches are compositionally biased toward basic and acidic residues: residues 360-372 and 381-390; these read SRHE…REHL and SHREDVEGEQ.

The protein belongs to the methyltransferase superfamily. RsmH family.

It is found in the cytoplasm. It catalyses the reaction cytidine(1402) in 16S rRNA + S-adenosyl-L-methionine = N(4)-methylcytidine(1402) in 16S rRNA + S-adenosyl-L-homocysteine + H(+). Functionally, specifically methylates the N4 position of cytidine in position 1402 (C1402) of 16S rRNA. The chain is Ribosomal RNA small subunit methyltransferase H from Corynebacterium kroppenstedtii (strain DSM 44385 / JCM 11950 / CIP 105744 / CCUG 35717).